A 473-amino-acid chain; its full sequence is Ribulose bisphosphate carboxylase large chain (473 aa).

Positions 116 and 166 each coordinate substrate. Residue Lys168 is the Proton acceptor of the active site. Lys170 contacts substrate. The Mg(2+) site is built by Lys194, Asp196, and Glu197. Lys194 bears the N6-carboxylysine mark. The active-site Proton acceptor is the His287. Residues Arg288, His320, and Ser372 each coordinate substrate.

The protein belongs to the RuBisCO large chain family. Type I subfamily. In terms of assembly, heterohexadecamer of 8 large chains and 8 small chains. The cofactor is Mg(2+).

The enzyme catalyses 2 (2R)-3-phosphoglycerate + 2 H(+) = D-ribulose 1,5-bisphosphate + CO2 + H2O. The catalysed reaction is D-ribulose 1,5-bisphosphate + O2 = 2-phosphoglycolate + (2R)-3-phosphoglycerate + 2 H(+). Functionally, ruBisCO catalyzes two reactions: the carboxylation of D-ribulose 1,5-bisphosphate, the primary event in carbon dioxide fixation, as well as the oxidative fragmentation of the pentose substrate. Both reactions occur simultaneously and in competition at the same active site. This chain is Ribulose bisphosphate carboxylase large chain, found in Methylococcus capsulatus (strain ATCC 33009 / NCIMB 11132 / Bath).